The sequence spans 338 residues: (2Z,6E)-hedycaryol synthase (338 aa).

Mg(2+)-binding residues include aspartate 82 and glutamate 87. Residues 82–87 carry the DDXXXE motif motif; that stretch reads DDQIDE. Arginine 175 contacts substrate. 2 residues coordinate Mg(2+): asparagine 221 and serine 225. Positions 221 to 229 match the NXXXSXXXE motif motif; sequence NDVFSVERE. Residue arginine 228 coordinates substrate. Glutamate 229 contributes to the Mg(2+) binding site.

Belongs to the terpene synthase family. As to quaternary structure, homodimer. The cofactor is Mg(2+).

It carries out the reaction (2E,6E)-farnesyl diphosphate + H2O = (2Z,6E)-hedycaryol + diphosphate. Its pathway is secondary metabolite biosynthesis; terpenoid biosynthesis. Catalyzes the conversion of (2E,6E)-farnesyl diphosphate (FPP) into (2Z,6E)-hedycaryol via a 1,11-cyclization. In Kitasatospora setae (strain ATCC 33774 / DSM 43861 / JCM 3304 / KCC A-0304 / NBRC 14216 / KM-6054) (Streptomyces setae), this protein is (2Z,6E)-hedycaryol synthase.